Consider the following 84-residue polypeptide: Toxin CsE9 (84 aa).

Positions 1–19 (MNSLLMITTCLILIGTVLA) are cleaved as a signal peptide. Residues 20–83 (EDGYLFDKRK…ISRTPGKTCK (64 aa)) enclose the LCN-type CS-alpha/beta domain. 4 disulfides stabilise this stretch: cysteine 31-cysteine 82, cysteine 35-cysteine 58, cysteine 44-cysteine 63, and cysteine 48-cysteine 65.

It belongs to the long (4 C-C) scorpion toxin superfamily. Sodium channel inhibitor family. Beta subfamily. As to expression, expressed by the venom gland.

The protein resides in the secreted. Beta toxins bind voltage-independently at site-4 of sodium channels (Nav) and shift the voltage of activation toward more negative potentials thereby affecting sodium channel activation and promoting spontaneous and repetitive firing. The chain is Toxin CsE9 from Centruroides sculpturatus (Arizona bark scorpion).